The primary structure comprises 146 residues: Large ribosomal subunit protein bL9 (146 aa).

It belongs to the bacterial ribosomal protein bL9 family. In terms of assembly, part of the 50S ribosomal subunit. Contacts protein L31.

Its function is as follows. Binds to the 23S rRNA and protein L31. This Deinococcus radiodurans (strain ATCC 13939 / DSM 20539 / JCM 16871 / CCUG 27074 / LMG 4051 / NBRC 15346 / NCIMB 9279 / VKM B-1422 / R1) protein is Large ribosomal subunit protein bL9 (rplI).